Here is a 229-residue protein sequence, read N- to C-terminus: 7-cyano-7-deazaguanine synthase (229 aa).

Residue 7 to 17 (LSGGLDSSTIL) coordinates ATP. The Zn(2+) site is built by C191, C199, C202, and C205.

It belongs to the QueC family. Requires Zn(2+) as cofactor.

It catalyses the reaction 7-carboxy-7-deazaguanine + NH4(+) + ATP = 7-cyano-7-deazaguanine + ADP + phosphate + H2O + H(+). It functions in the pathway purine metabolism; 7-cyano-7-deazaguanine biosynthesis. In terms of biological role, catalyzes the ATP-dependent conversion of 7-carboxy-7-deazaguanine (CDG) to 7-cyano-7-deazaguanine (preQ(0)). The protein is 7-cyano-7-deazaguanine synthase of Nostoc sp. (strain PCC 7120 / SAG 25.82 / UTEX 2576).